A 538-amino-acid chain; its full sequence is Cytochrome P450 monooxygenase xanG (538 aa).

A helical membrane pass occupies residues 44-64 (MILYYLASIPLAIICYLAWYL). The N-linked (GlcNAc...) asparagine glycan is linked to Asn378. Cys489 is a heme binding site.

Belongs to the cytochrome P450 family. The cofactor is heme.

It is found in the membrane. Its pathway is secondary metabolite biosynthesis. In terms of biological role, cytochrome P450 monooxygenase; part of the gene cluster that mediates the biosynthesis of the isocyanide xanthocillin and its derivatives. The first step of the pathway consists in the conversion of tyrosine into a vinyl-isonitrile intermediate by the isocyanide synthase xanB. Subsequent oxidative dimerization of this intermediate to form xanthocillin may involve the cytochrome P450 monooxygenase xanG, whose expression is coregulated with that of XanB. Xanthocillin can be further modified by the isonitrile hydratase-like protein xanA which introduces N-formyl groups and the methyltransferase xanE which introduces methyl groups, leading to the production of several derivatives including fumiformamide. Finally, fumiformamide can be subject to both oxidative and reductive cyclization to yield melanocins E and F, respectively. The polypeptide is Cytochrome P450 monooxygenase xanG (Aspergillus fumigatus (strain ATCC MYA-4609 / CBS 101355 / FGSC A1100 / Af293) (Neosartorya fumigata)).